Here is a 429-residue protein sequence, read N- to C-terminus: 3-phosphoshikimate 1-carboxyvinyltransferase (429 aa).

The 3-phosphoshikimate site is built by Lys22, Ser23, and Arg27. Lys22 provides a ligand contact to phosphoenolpyruvate. Phosphoenolpyruvate is bound by residues Gly94 and Arg122. Residues Ser167, Gln169, Asp315, and Lys342 each contribute to the 3-phosphoshikimate site. Gln169 contributes to the phosphoenolpyruvate binding site. Asp315 functions as the Proton acceptor in the catalytic mechanism. Phosphoenolpyruvate-binding residues include Arg346 and Arg388.

The protein belongs to the EPSP synthase family. As to quaternary structure, monomer.

Its subcellular location is the cytoplasm. It carries out the reaction 3-phosphoshikimate + phosphoenolpyruvate = 5-O-(1-carboxyvinyl)-3-phosphoshikimate + phosphate. Its pathway is metabolic intermediate biosynthesis; chorismate biosynthesis; chorismate from D-erythrose 4-phosphate and phosphoenolpyruvate: step 6/7. Functionally, catalyzes the transfer of the enolpyruvyl moiety of phosphoenolpyruvate (PEP) to the 5-hydroxyl of shikimate-3-phosphate (S3P) to produce enolpyruvyl shikimate-3-phosphate and inorganic phosphate. The polypeptide is 3-phosphoshikimate 1-carboxyvinyltransferase (Geotalea daltonii (strain DSM 22248 / JCM 15807 / FRC-32) (Geobacter daltonii)).